The primary structure comprises 154 residues: Large ribosomal subunit protein uL13 (154 aa).

It belongs to the universal ribosomal protein uL13 family. Part of the 50S ribosomal subunit.

Functionally, this protein is one of the early assembly proteins of the 50S ribosomal subunit, although it is not seen to bind rRNA by itself. It is important during the early stages of 50S assembly. The chain is Large ribosomal subunit protein uL13 from Rhizobium meliloti (strain 1021) (Ensifer meliloti).